Here is a 257-residue protein sequence, read N- to C-terminus: MTEFVVAIPARYAASRLPGKPLRLLGGEPLVLHVARRALQAGAGEVWVATDDQRIADALSGLAEVKVAMTATSHASGTDRLAECARIAGWADDTVVVNLQGDEPFAPAAGIRAVAQALVEGNAPMSTLATAVEDAETLFDPNVVKLVRNVRNEAMYFSRAPIAWHRDGFARSREVLPEGHAWLRHIGIYGYRAGFLQQFAAMPPGRLEQVESLEQLRVLEAGYPISVAISPEPFPAGIDTPEDLERAEALLQTLAAR.

This sequence belongs to the KdsB family.

The protein resides in the cytoplasm. The catalysed reaction is 3-deoxy-alpha-D-manno-oct-2-ulosonate + CTP = CMP-3-deoxy-beta-D-manno-octulosonate + diphosphate. It functions in the pathway nucleotide-sugar biosynthesis; CMP-3-deoxy-D-manno-octulosonate biosynthesis; CMP-3-deoxy-D-manno-octulosonate from 3-deoxy-D-manno-octulosonate and CTP: step 1/1. Its pathway is bacterial outer membrane biogenesis; lipopolysaccharide biosynthesis. In terms of biological role, activates KDO (a required 8-carbon sugar) for incorporation into bacterial lipopolysaccharide in Gram-negative bacteria. The chain is 3-deoxy-manno-octulosonate cytidylyltransferase from Stenotrophomonas maltophilia (strain K279a).